The sequence spans 180 residues: Large ribosomal subunit protein uL5 (180 aa).

This sequence belongs to the universal ribosomal protein uL5 family. As to quaternary structure, part of the 50S ribosomal subunit; part of the 5S rRNA/L5/L18/L25 subcomplex. Contacts the 5S rRNA and the P site tRNA. Forms a bridge to the 30S subunit in the 70S ribosome.

Functionally, this is one of the proteins that bind and probably mediate the attachment of the 5S RNA into the large ribosomal subunit, where it forms part of the central protuberance. In the 70S ribosome it contacts protein S13 of the 30S subunit (bridge B1b), connecting the 2 subunits; this bridge is implicated in subunit movement. Contacts the P site tRNA; the 5S rRNA and some of its associated proteins might help stabilize positioning of ribosome-bound tRNAs. In Lactobacillus johnsonii (strain CNCM I-12250 / La1 / NCC 533), this protein is Large ribosomal subunit protein uL5.